Reading from the N-terminus, the 405-residue chain is L-cysteine:1D-myo-inositol 2-amino-2-deoxy-alpha-D-glucopyranoside ligase (405 aa).

Cysteine 43 lines the Zn(2+) pocket. L-cysteinyl-5'-AMP-binding positions include 43–46 (CGIT), threonine 58, and 81–83 (NIT). The 'HIGH' region motif lies at 45–55 (ITPYDATHLGH). Residues 187–192 (ERGGDP) carry the 'ERGGDP' region motif. Residue tryptophan 227 coordinates L-cysteinyl-5'-AMP. A Zn(2+)-binding site is contributed by cysteine 231. 249–251 (GSD) contacts L-cysteinyl-5'-AMP. Position 256 (histidine 256) interacts with Zn(2+). Residue isoleucine 283 participates in L-cysteinyl-5'-AMP binding. A 'KMSKS' region motif is present at residues 289 to 293 (KMSKS).

Belongs to the class-I aminoacyl-tRNA synthetase family. MshC subfamily. In terms of assembly, monomer. The cofactor is Zn(2+).

The enzyme catalyses 1D-myo-inositol 2-amino-2-deoxy-alpha-D-glucopyranoside + L-cysteine + ATP = 1D-myo-inositol 2-(L-cysteinylamino)-2-deoxy-alpha-D-glucopyranoside + AMP + diphosphate + H(+). Catalyzes the ATP-dependent condensation of GlcN-Ins and L-cysteine to form L-Cys-GlcN-Ins. The polypeptide is L-cysteine:1D-myo-inositol 2-amino-2-deoxy-alpha-D-glucopyranoside ligase (Nakamurella multipartita (strain ATCC 700099 / DSM 44233 / CIP 104796 / JCM 9543 / NBRC 105858 / Y-104) (Microsphaera multipartita)).